Here is a 154-residue protein sequence, read N- to C-terminus: Large ribosomal subunit protein uL13 (154 aa).

This sequence belongs to the universal ribosomal protein uL13 family. In terms of assembly, part of the 50S ribosomal subunit.

This protein is one of the early assembly proteins of the 50S ribosomal subunit, although it is not seen to bind rRNA by itself. It is important during the early stages of 50S assembly. The chain is Large ribosomal subunit protein uL13 from Rhizobium etli (strain ATCC 51251 / DSM 11541 / JCM 21823 / NBRC 15573 / CFN 42).